The following is a 55-amino-acid chain: Spermatid nuclear transition protein 1 (55 aa).

Positions Met-1–Lys-42 are enriched in basic residues. The disordered stretch occupies residues Met-1–Leu-55. 2 positions are modified to phosphoserine: Ser-36 and Ser-40.

This sequence belongs to the nuclear transition protein 1 family. As to expression, testis-specific.

It is found in the nucleus. The protein resides in the chromosome. Plays a key role in the replacement of histones to protamine in the elongating spermatids of mammals. In condensing spermatids, loaded onto the nucleosomes, where it promotes the recruitment and processing of protamines, which are responsible for histone eviction. The histone H2AB1-H2BC1/TH2B dimer is required for loading of TNP1 onto chromatin. The polypeptide is Spermatid nuclear transition protein 1 (Mus musculus (Mouse)).